Reading from the N-terminus, the 617-residue chain is Cell pattern formation-associated protein STUA (617 aa).

Residues 1-79 (MNQPAADMYY…PASQMGQNVL (79 aa)) are disordered. Polar residues predominate over residues 24–34 (TVTSGAMSYHS). Positions 45-58 (PQYAPQPQYSQYGY) are enriched in low complexity. Polar residues predominate over residues 61–76 (GLTSPQSAQPASQMGQ). Residues 106 to 212 (RVTATLWEDE…HNIGALLYHP (107 aa)) form the HTH APSES-type domain. The H-T-H motif DNA-binding region spans 140–161 (GTKLLNVAGMTRGRRDGILKSE). Disordered stretches follow at residues 223-274 (AAAE…MGRP), 300-451 (SDSG…DSGA), and 463-617 (APAV…PRRR). Composition is skewed to low complexity over residues 305-318 (QWAQ…AQGA) and 334-345 (PATPASTPPGTT). 2 stretches are compositionally biased toward polar residues: residues 346–361 (IQNM…QYDN) and 368–382 (PSAQ…NPAS). Over residues 438-447 (EHDHDAEYTH) the composition is skewed to basic and acidic residues. A compositionally biased stretch (low complexity) spans 488 to 509 (PASGRATPRTAAAPQPYYSQQA). 2 stretches are compositionally biased toward polar residues: residues 519 to 533 (QQPS…SNDR) and 553 to 563 (SMSNGYASQMN). Residues 569–593 (KRGRDEDDDLQRPSSGGGMDLKRRK) form a nuclear localization domain region. Over residues 599–617 (QVPAMAYAPPVMAQQPRRR) the composition is skewed to low complexity.

The protein belongs to the EFG1/PHD1/stuA family.

It is found in the nucleus. Transcription factor that regulates asexual reproduction. Binds the StuA-response elements (StRE) with the consensus sequence 5'-(A/T)CGCG(T/A)N(A/C)-3' at the promoters of target genes. Required for the formation of aerial hyphae, efficient conidiation, and the formation of perithecia. Essential for the generation of normal turgor pressure within the appressorium. Required for infection of intact apple fruit and penetration of onion epidermal cells. This chain is Cell pattern formation-associated protein STUA, found in Colletotrichum gloeosporioides (Anthracnose fungus).